The primary structure comprises 384 residues: S-adenosylmethionine synthase (384 aa).

H15 is an ATP binding site. D17 is a binding site for Mg(2+). Residue E43 coordinates K(+). L-methionine is bound by residues E56 and Q99. Residues Q99–R109 form a flexible loop region. Residues D164–K166, R231–F232, D240, R246–K247, A263, and K267 contribute to the ATP site. D240 contributes to the L-methionine binding site. K271 is an L-methionine binding site.

Belongs to the AdoMet synthase family. As to quaternary structure, homotetramer; dimer of dimers. Mg(2+) serves as cofactor. It depends on K(+) as a cofactor.

The protein resides in the cytoplasm. The enzyme catalyses L-methionine + ATP + H2O = S-adenosyl-L-methionine + phosphate + diphosphate. It functions in the pathway amino-acid biosynthesis; S-adenosyl-L-methionine biosynthesis; S-adenosyl-L-methionine from L-methionine: step 1/1. In terms of biological role, catalyzes the formation of S-adenosylmethionine (AdoMet) from methionine and ATP. The overall synthetic reaction is composed of two sequential steps, AdoMet formation and the subsequent tripolyphosphate hydrolysis which occurs prior to release of AdoMet from the enzyme. The polypeptide is S-adenosylmethionine synthase (Shewanella woodyi (strain ATCC 51908 / MS32)).